Reading from the N-terminus, the 190-residue chain is ATP synthase subunit b, chloroplastic (190 aa).

A helical transmembrane segment spans residues 35–55; that stretch reads LSVVLGVLIFFGKGVCASCLL.

It belongs to the ATPase B chain family. As to quaternary structure, F-type ATPases have 2 components, F(1) - the catalytic core - and F(0) - the membrane proton channel. F(1) has five subunits: alpha(3), beta(3), gamma(1), delta(1), epsilon(1). F(0) has four main subunits: a(1), b(1), b'(1) and c(10-14). The alpha and beta chains form an alternating ring which encloses part of the gamma chain. F(1) is attached to F(0) by a central stalk formed by the gamma and epsilon chains, while a peripheral stalk is formed by the delta, b and b' chains.

It localises to the plastid. The protein localises to the chloroplast thylakoid membrane. Its function is as follows. F(1)F(0) ATP synthase produces ATP from ADP in the presence of a proton or sodium gradient. F-type ATPases consist of two structural domains, F(1) containing the extramembraneous catalytic core and F(0) containing the membrane proton channel, linked together by a central stalk and a peripheral stalk. During catalysis, ATP synthesis in the catalytic domain of F(1) is coupled via a rotary mechanism of the central stalk subunits to proton translocation. Functionally, component of the F(0) channel, it forms part of the peripheral stalk, linking F(1) to F(0). This is ATP synthase subunit b, chloroplastic from Coffea arabica (Arabian coffee).